The following is a 121-amino-acid chain: Large ribosomal subunit protein uL14 (121 aa).

This sequence belongs to the universal ribosomal protein uL14 family. Part of the 50S ribosomal subunit. Forms a cluster with proteins L3 and L19. In the 70S ribosome, L14 and L19 interact and together make contacts with the 16S rRNA in bridges B5 and B8.

Binds to 23S rRNA. Forms part of two intersubunit bridges in the 70S ribosome. This Porphyromonas gingivalis (strain ATCC 33277 / DSM 20709 / CIP 103683 / JCM 12257 / NCTC 11834 / 2561) protein is Large ribosomal subunit protein uL14.